The primary structure comprises 563 residues: Arginine--tRNA ligase (563 aa).

The 'HIGH' region signature appears at 120–130 (PNIAKPFHIGH).

It belongs to the class-I aminoacyl-tRNA synthetase family. Monomer.

The protein localises to the cytoplasm. It carries out the reaction tRNA(Arg) + L-arginine + ATP = L-arginyl-tRNA(Arg) + AMP + diphosphate. This is Arginine--tRNA ligase from Clostridium botulinum (strain ATCC 19397 / Type A).